Here is a 419-residue protein sequence, read N- to C-terminus: MKLLSRDTRLVCELALCPLALVFWSILGVRALDNGLARTPTMGWLHWERFMCNLDCQEEPDACISEQLFMQMAELMVSDGWRDAGYDYLCIDDCWMAPERDSKGRLQADPQRFPSGIKHLANYVHSKGLKLGIYADVGNKTCAGFPGSFGSYDIDAQTFADWGVDLLKFDGCHCDSVVSLENGYKYMALALNRTGRSIVYSCEWPLYLRPFHKPNYTDIQYYCNHWRNFDDVYDSWESIKNILSWTVVYQKEIVEVAGPGSWNDPDMLVIGNFGLSWDQQVTQMALWAIMAAPLLMSNDLRQISSQAKALLQNKDVIAINQDPLGKQGYCFRKENHIEVWERPLSNLAWAVAVRNLQEIGGPCPYTIQISSLGRGLACNPGCIITQLLPEKVHLGFYEWTLTLKTRVNPSGTVLFRLER.

A signal peptide spans 1–31 (MKLLSRDTRLVCELALCPLALVFWSILGVRA). Disulfide bonds link cysteine 52–cysteine 94 and cysteine 56–cysteine 63. Asparagine 139 carries an N-linked (GlcNAc...) asparagine glycan. A disulfide bond links cysteine 142 and cysteine 172. The active-site Nucleophile is the aspartate 170. The residue at position 186 (tyrosine 186) is a Phosphotyrosine. The N-linked (GlcNAc...) asparagine glycan is linked to asparagine 192. Cysteine 202 and cysteine 223 form a disulfide bridge. 203–207 (EWPLY) lines the substrate pocket. The N-linked (GlcNAc...) asparagine glycan is linked to asparagine 215. Aspartate 231 serves as the catalytic Proton donor. Cysteine 378 and cysteine 382 form a disulfide bridge.

Belongs to the glycosyl hydrolase 27 family. Homodimer.

Its subcellular location is the lysosome. It carries out the reaction Hydrolysis of terminal, non-reducing alpha-D-galactose residues in alpha-D-galactosides, including galactose oligosaccharides, galactomannans and galactolipids.. The enzyme catalyses a globoside Gb3Cer (d18:1(4E)) + H2O = a beta-D-Gal-(1-&gt;4)-beta-D-Glc-(1&lt;-&gt;1)-Cer(d18:1(4E)) + D-galactose. It catalyses the reaction a globoside Gb3Cer + H2O = a beta-D-galactosyl-(1-&gt;4)-beta-D-glucosyl-(1&lt;-&gt;1)-ceramide + D-galactose. Its activity is regulated as follows. Galactosylgalactosylglucosylceramidase activity is stimulated by saposin B and ammonium chloride. Catalyzes the hydrolysis of glycosphingolipids and participates in their degradation in the lysosome. This is Alpha-galactosidase A from Mus musculus (Mouse).